We begin with the raw amino-acid sequence, 559 residues long: Phosphatase and actin regulator 3 (559 aa).

The segment at 1–65 (MAASEDGSGC…GIRTPPVRRN (65 aa)) is disordered. A compositionally biased stretch (polar residues) spans 15–24 (GRSQSDPSVL). Residues 25-35 (TDSSATSSADA) show a composition bias toward low complexity. Thr-70 is modified (phosphothreonine). Positions 82–342 (KKKNEKLKQT…VERGKEREEA (261 aa)) are disordered. The RPEL 1 repeat unit spans residues 93 to 118 (SALEKKMAGRQGREELIKKGLLEMME). The segment covering 95 to 113 (LEKKMAGRQGREELIKKGL) has biased composition (basic and acidic residues). A compositionally biased stretch (polar residues) spans 134–151 (SVQSEPPTPKSETLTSED). The span at 229–240 (PSPPLLPTPPPK) shows a compositional bias: pro residues. Ser-230 is modified (phosphoserine). Position 236 is a phosphothreonine (Thr-236). Polar residues-rich tracts occupy residues 248-262 (NVTG…SSMK) and 270-281 (GQLSTPTGSPHL). Positions 293–342 (VIEELHRALATKHRQDSFQGRESKGSPKKRLDVRLSRTSSVERGKEREEA) are enriched in basic and acidic residues. Residues 346-369 (DGALENKRTAAKESEENKENLIIN) are a coiled coil. RPEL repeat units lie at residues 401–426 (ELLA…PRRT), 439–464 (MKLS…KQRN), and 477–502 (QRLT…IRFS). A required for PP1CA binding and inhibition of PP1 activity region spans residues 438–518 (EMKLSKRLSQ…KAQDYDRRAD (81 aa)). A coiled-coil region spans residues 450–486 (AVEELERRNILKQRNDQTEQEERREIKQRLTRKLNQR).

It belongs to the phosphatase and actin regulator family. In terms of assembly, binds actin and PPP1CA; thus inhibiting the protein phosphatase 1 (PP1) activity. As to expression, abundantly expressed in brain. Also found in several tumors such as lung carcinomas, nervous tumors and HL-60 leukemia cells. Isoform 3 is the major form in U-937, GOTO and HL-60 leukemia cells.

It localises to the nucleus matrix. The polypeptide is Phosphatase and actin regulator 3 (PHACTR3) (Homo sapiens (Human)).